The following is a 146-amino-acid chain: Large ribosomal subunit protein uL15 (146 aa).

Residues 1 to 13 (MKLHELKPAEGSR) are compositionally biased toward basic and acidic residues. Residues 1–52 (MKLHELKPAEGSRKVRNRVGRGIGSGNGKTAGKGHKGQNARSGGGVRLGFEG) are disordered. Gly residues-rich tracts occupy residues 21-31 (RGIGSGNGKTA) and 42-52 (SGGGVRLGFEG).

It belongs to the universal ribosomal protein uL15 family. Part of the 50S ribosomal subunit.

In terms of biological role, binds to the 23S rRNA. The chain is Large ribosomal subunit protein uL15 from Bacillus cereus (strain B4264).